A 1221-amino-acid polypeptide reads, in one-letter code: WEB family protein At4g27595, chloroplastic (1221 aa).

Residues methionine 1–proline 68 are disordered. A chloroplast-targeting transit peptide spans methionine 1–methionine 82. The segment covering serine 32 to proline 58 has biased composition (polar residues). Coiled-coil stretches lie at residues threonine 95 to histidine 149, threonine 202 to lysine 543, and alanine 587 to isoleucine 1084. The span at glutamate 1073–glutamate 1083 shows a compositional bias: basic and acidic residues. Residues glutamate 1073–lysine 1221 are disordered. Over residues isoleucine 1084–glutamine 1097 the composition is skewed to polar residues. 2 stretches are compositionally biased toward basic and acidic residues: residues alanine 1106 to threonine 1116 and lysine 1129 to aspartate 1160. Positions asparagine 1175–glutamate 1187 are enriched in polar residues.

It belongs to the WEB family.

The protein localises to the plastid. Its subcellular location is the chloroplast. This chain is WEB family protein At4g27595, chloroplastic, found in Arabidopsis thaliana (Mouse-ear cress).